Consider the following 189-residue polypeptide: uncharacterized protein (189 aa).

Residues Met1 to Leu174 form the Macro domain.

This is an uncharacterized protein from Aeropyrum pernix (strain ATCC 700893 / DSM 11879 / JCM 9820 / NBRC 100138 / K1).